Here is a 138-residue protein sequence, read N- to C-terminus: ATP synthase epsilon chain (138 aa).

Belongs to the ATPase epsilon chain family. F-type ATPases have 2 components, CF(1) - the catalytic core - and CF(0) - the membrane proton channel. CF(1) has five subunits: alpha(3), beta(3), gamma(1), delta(1), epsilon(1). CF(0) has three main subunits: a, b and c.

The protein localises to the cell membrane. Produces ATP from ADP in the presence of a proton gradient across the membrane. The polypeptide is ATP synthase epsilon chain (Streptococcus uberis (strain ATCC BAA-854 / 0140J)).